Reading from the N-terminus, the 1024-residue chain is Error-prone DNA polymerase (1024 aa).

The protein belongs to the DNA polymerase type-C family. DnaE2 subfamily.

It is found in the cytoplasm. It catalyses the reaction DNA(n) + a 2'-deoxyribonucleoside 5'-triphosphate = DNA(n+1) + diphosphate. DNA polymerase involved in damage-induced mutagenesis and translesion synthesis (TLS). It is not the major replicative DNA polymerase. The protein is Error-prone DNA polymerase of Vibrio campbellii (strain ATCC BAA-1116).